Here is a 374-residue protein sequence, read N- to C-terminus: tRNA-specific 2-thiouridylase MnmA (374 aa).

ATP-binding positions include 13-20 (GMSGGVDS) and Met-39. Positions 99–101 (NPD) are interaction with target base in tRNA. Cys-104 acts as the Nucleophile in catalysis. An intrachain disulfide couples Cys-104 to Cys-201. Residue Gly-128 coordinates ATP. The tract at residues 151–153 (KDQ) is interaction with tRNA. The Cysteine persulfide intermediate role is filled by Cys-201. The interaction with tRNA stretch occupies residues 313 to 314 (RY).

The protein belongs to the MnmA/TRMU family.

Its subcellular location is the cytoplasm. It catalyses the reaction S-sulfanyl-L-cysteinyl-[protein] + uridine(34) in tRNA + AH2 + ATP = 2-thiouridine(34) in tRNA + L-cysteinyl-[protein] + A + AMP + diphosphate + H(+). In terms of biological role, catalyzes the 2-thiolation of uridine at the wobble position (U34) of tRNA, leading to the formation of s(2)U34. This chain is tRNA-specific 2-thiouridylase MnmA, found in Streptococcus equi subsp. zooepidemicus (strain H70).